A 101-amino-acid chain; its full sequence is MKPNFSKGLLPAVVIEEGTKEVLMLAYMNEEAYEKTLKTKRTWFYSRSRRSLWNKGETSGHVQHVQSLYLDCDQDAIVVFVKQVGPACHTGEKTCFHYKII.

A Mg(2+)-binding site is contributed by aspartate 71. Cysteine 72 provides a ligand contact to Zn(2+). Mg(2+) is bound by residues aspartate 73 and aspartate 75. Zn(2+) contacts are provided by cysteine 88 and cysteine 95.

This sequence belongs to the PRA-CH family. Homodimer. Mg(2+) is required as a cofactor. Zn(2+) serves as cofactor.

Its subcellular location is the cytoplasm. The enzyme catalyses 1-(5-phospho-beta-D-ribosyl)-5'-AMP + H2O = 1-(5-phospho-beta-D-ribosyl)-5-[(5-phospho-beta-D-ribosylamino)methylideneamino]imidazole-4-carboxamide. The protein operates within amino-acid biosynthesis; L-histidine biosynthesis; L-histidine from 5-phospho-alpha-D-ribose 1-diphosphate: step 3/9. Its function is as follows. Catalyzes the hydrolysis of the adenine ring of phosphoribosyl-AMP. The protein is Phosphoribosyl-AMP cyclohydrolase of Bacillus cereus (strain AH820).